The chain runs to 237 residues: Large ribosomal subunit protein uL1 (237 aa).

The protein belongs to the universal ribosomal protein uL1 family. In terms of assembly, part of the 50S ribosomal subunit.

In terms of biological role, binds directly to 23S rRNA. The L1 stalk is quite mobile in the ribosome, and is involved in E site tRNA release. Functionally, protein L1 is also a translational repressor protein, it controls the translation of the L11 operon by binding to its mRNA. This Myxococcus xanthus (strain DK1622) protein is Large ribosomal subunit protein uL1.